A 277-amino-acid chain; its full sequence is Large ribosomal subunit protein uL2 (277 aa).

The tract at residues 212-277 (RWRGKRPHVR…KFIVRGRKSK (66 aa)) is disordered. The span at 254–277 (TAGKKTRDKKKASTKFIVRGRKSK) shows a compositional bias: basic residues.

This sequence belongs to the universal ribosomal protein uL2 family. In terms of assembly, part of the 50S ribosomal subunit. Forms a bridge to the 30S subunit in the 70S ribosome.

Its function is as follows. One of the primary rRNA binding proteins. Required for association of the 30S and 50S subunits to form the 70S ribosome, for tRNA binding and peptide bond formation. It has been suggested to have peptidyltransferase activity; this is somewhat controversial. Makes several contacts with the 16S rRNA in the 70S ribosome. In Leuconostoc mesenteroides subsp. mesenteroides (strain ATCC 8293 / DSM 20343 / BCRC 11652 / CCM 1803 / JCM 6124 / NCDO 523 / NBRC 100496 / NCIMB 8023 / NCTC 12954 / NRRL B-1118 / 37Y), this protein is Large ribosomal subunit protein uL2.